The primary structure comprises 29 residues: Cytochrome b6-f complex subunit 8 (29 aa).

A helical membrane pass occupies residues 3–23 (MVSLAWAALMVVFTFSLSLVV).

Belongs to the PetN family. The 4 large subunits of the cytochrome b6-f complex are cytochrome b6, subunit IV (17 kDa polypeptide, PetD), cytochrome f and the Rieske protein, while the 4 small subunits are PetG, PetL, PetM and PetN. The complex functions as a dimer.

Its subcellular location is the plastid. The protein resides in the chloroplast thylakoid membrane. Its function is as follows. Component of the cytochrome b6-f complex, which mediates electron transfer between photosystem II (PSII) and photosystem I (PSI), cyclic electron flow around PSI, and state transitions. The polypeptide is Cytochrome b6-f complex subunit 8 (Cucumis sativus (Cucumber)).